We begin with the raw amino-acid sequence, 485 residues long: N-succinylglutamate 5-semialdehyde dehydrogenase (485 aa).

220 to 225 lines the NAD(+) pocket; that stretch reads GSANTG. Residues Glu243 and Cys278 contribute to the active site.

The protein belongs to the aldehyde dehydrogenase family. AstD subfamily.

The enzyme catalyses N-succinyl-L-glutamate 5-semialdehyde + NAD(+) + H2O = N-succinyl-L-glutamate + NADH + 2 H(+). It functions in the pathway amino-acid degradation; L-arginine degradation via AST pathway; L-glutamate and succinate from L-arginine: step 4/5. Functionally, catalyzes the NAD-dependent reduction of succinylglutamate semialdehyde into succinylglutamate. The sequence is that of N-succinylglutamate 5-semialdehyde dehydrogenase from Vibrio parahaemolyticus serotype O3:K6 (strain RIMD 2210633).